The following is a 933-amino-acid chain: Bifunctional uridylyltransferase/uridylyl-removing enzyme (933 aa).

The interval 1–379 (MAKISLKLDE…TFQRRKRKLA (379 aa)) is uridylyltransferase. The tract at residues 380–736 (GTSDFIVDNH…VKTHQFEAVT (357 aa)) is uridylyl-removing. In terms of domain architecture, HD spans 496–619 (VDEHLIRCIG…VQSVERLKLL (124 aa)). ACT domains follow at residues 737–818 (EITV…EMIE) and 848–922 (VIEV…GIAP).

This sequence belongs to the GlnD family. It depends on Mg(2+) as a cofactor.

It catalyses the reaction [protein-PII]-L-tyrosine + UTP = [protein-PII]-uridylyl-L-tyrosine + diphosphate. It carries out the reaction [protein-PII]-uridylyl-L-tyrosine + H2O = [protein-PII]-L-tyrosine + UMP + H(+). Uridylyltransferase (UTase) activity is inhibited by glutamine, while glutamine activates uridylyl-removing (UR) activity. In terms of biological role, modifies, by uridylylation and deuridylylation, the PII regulatory proteins (GlnB and homologs), in response to the nitrogen status of the cell that GlnD senses through the glutamine level. Under low glutamine levels, catalyzes the conversion of the PII proteins and UTP to PII-UMP and PPi, while under higher glutamine levels, GlnD hydrolyzes PII-UMP to PII and UMP (deuridylylation). Thus, controls uridylylation state and activity of the PII proteins, and plays an important role in the regulation of nitrogen fixation and metabolism. In Mesorhizobium japonicum (strain LMG 29417 / CECT 9101 / MAFF 303099) (Mesorhizobium loti (strain MAFF 303099)), this protein is Bifunctional uridylyltransferase/uridylyl-removing enzyme.